The following is a 368-amino-acid chain: tRNA N6-adenosine threonylcarbamoyltransferase (368 aa).

H108 and H112 together coordinate Fe cation. Residues 149–153, D183, G196, D200, and N301 each bind substrate; that span reads LVSGG. Fe cation is bound at residue D329.

The protein belongs to the KAE1 / TsaD family. Fe(2+) serves as cofactor.

The protein resides in the cytoplasm. The catalysed reaction is L-threonylcarbamoyladenylate + adenosine(37) in tRNA = N(6)-L-threonylcarbamoyladenosine(37) in tRNA + AMP + H(+). In terms of biological role, required for the formation of a threonylcarbamoyl group on adenosine at position 37 (t(6)A37) in tRNAs that read codons beginning with adenine. Is involved in the transfer of the threonylcarbamoyl moiety of threonylcarbamoyl-AMP (TC-AMP) to the N6 group of A37, together with TsaE and TsaB. TsaD likely plays a direct catalytic role in this reaction. The sequence is that of tRNA N6-adenosine threonylcarbamoyltransferase from Paenarthrobacter aurescens (strain TC1).